The primary structure comprises 195 residues: Glycerol-3-phosphate acyltransferase (195 aa).

4 helical membrane-spanning segments follow: residues 2 to 22 (INLLVIISAYFIGNFSTSFIV), 79 to 99 (AALMAGIAVVIGHNWPVLLGF), 111 to 131 (VALIASPLAAIASISLGVVIL), and 146 to 166 (TILPFFLFSYGLEYFIFGLVL).

It belongs to the PlsY family. Probably interacts with PlsX.

The protein resides in the cell membrane. The enzyme catalyses an acyl phosphate + sn-glycerol 3-phosphate = a 1-acyl-sn-glycero-3-phosphate + phosphate. Its pathway is lipid metabolism; phospholipid metabolism. Catalyzes the transfer of an acyl group from acyl-phosphate (acyl-PO(4)) to glycerol-3-phosphate (G3P) to form lysophosphatidic acid (LPA). This enzyme utilizes acyl-phosphate as fatty acyl donor, but not acyl-CoA or acyl-ACP. The polypeptide is Glycerol-3-phosphate acyltransferase (Alkaliphilus metalliredigens (strain QYMF)).